The following is a 309-amino-acid chain: Chronophin (309 aa).

D25 acts as the Nucleophile in catalysis. Mg(2+)-binding residues include D25 and D27. D27 functions as the Proton donor in the catalytic mechanism. Substrate contacts are provided by residues 58 to 60 (SNN), H178, and K209. D234 is a binding site for Mg(2+).

The protein belongs to the HAD-like hydrolase superfamily. In terms of assembly, homodimer. Requires Mg(2+) as cofactor.

The protein resides in the cytoplasm. It is found in the cytosol. It localises to the cytoskeleton. Its subcellular location is the cell projection. The protein localises to the ruffle membrane. The protein resides in the lamellipodium membrane. It is found in the cell membrane. It catalyses the reaction pyridoxal 5'-phosphate + H2O = pyridoxal + phosphate. It carries out the reaction pyridoxine 5'-phosphate + H2O = pyridoxine + phosphate. The catalysed reaction is pyridoxamine + phosphate = pyridoxamine 5'-phosphate + H2O. The enzyme catalyses O-phospho-L-seryl-[protein] + H2O = L-seryl-[protein] + phosphate. Functionally, functions as a pyridoxal phosphate (PLP) phosphatase, which also catalyzes the dephosphorylation of pyridoxine 5'-phosphate (PNP) and pyridoxamine 5'-phosphate (PMP), with order of substrate preference PLP &gt; PNP &gt; PMP and therefore plays a role in vitamin B6 metabolism. Also functions as a protein serine phosphatase that specifically dephosphorylates 'Ser-3' in proteins of the actin-depolymerizing factor (ADF)/cofilin family like CFL1 and DSTN. Thereby, regulates cofilin-dependent actin cytoskeleton reorganization, being required for normal progress through mitosis and normal cytokinesis. Does not dephosphorylate phosphothreonines in LIMK1. Does not dephosphorylate peptides containing phosphotyrosine. This is Chronophin from Rattus norvegicus (Rat).